A 203-amino-acid polypeptide reads, in one-letter code: Histone deacetylase HDT4 (203 aa).

Residues 2–5 (EFWG) are required to repress transcription. The disordered stretch occupies residues 121-203 (AALPQNEINP…PFPCGPSCKK (83 aa)). Residues 129–157 (NPEEDDESDSDEMGLDEDDDSSDEEDVEA) show a composition bias toward acidic residues. Basic residues predominate over residues 180-193 (GGKKNKSSGGKKRC).

Belongs to the histone deacetylase HD2 family. In terms of tissue distribution, confined to stems and flowers with young siliques.

It is found in the nucleus. It localises to the nucleolus. Its function is as follows. Probably mediates the deacetylation of lysine residues lysine residues on the N-terminal part of the core histones (H2A, H2B, H3 and H4). Histone deacetylation gives a tag for epigenetic repression and plays an important role in transcriptional regulation, cell cycle progression and developmental events. This Arabidopsis thaliana (Mouse-ear cress) protein is Histone deacetylase HDT4 (HDT4).